A 132-amino-acid polypeptide reads, in one-letter code: Myelin P2 protein (132 aa).

Ser-2 carries the N-acetylserine modification. Arg-107 lines the (9Z)-octadecenoate pocket. Residue Arg-107 coordinates hexadecanoate. Cys-118 and Cys-125 are disulfide-bonded. Position 127–129 (127–129) interacts with (9Z)-octadecenoate; it reads RIY. Residue 127–129 coordinates hexadecanoate; that stretch reads RIY.

It belongs to the calycin superfamily. Fatty-acid binding protein (FABP) family. Monomer. As to expression, detected in spinal cord (at protein level).

The protein localises to the cytoplasm. May play a role in lipid transport protein in Schwann cells. May bind cholesterol. The chain is Myelin P2 protein (PMP2) from Equus caballus (Horse).